The chain runs to 84 residues: Small ribosomal subunit protein bS18 (84 aa).

This sequence belongs to the bacterial ribosomal protein bS18 family. As to quaternary structure, part of the 30S ribosomal subunit. Forms a tight heterodimer with protein bS6.

Binds as a heterodimer with protein bS6 to the central domain of the 16S rRNA, where it helps stabilize the platform of the 30S subunit. The sequence is that of Small ribosomal subunit protein bS18 from Clostridium kluyveri (strain NBRC 12016).